The primary structure comprises 298 residues: 4-hydroxy-tetrahydrodipicolinate synthase (298 aa).

Residue Thr48 coordinates pyruvate. The active-site Proton donor/acceptor is Tyr137. Lys166 functions as the Schiff-base intermediate with substrate in the catalytic mechanism. Ile207 contributes to the pyruvate binding site.

The protein belongs to the DapA family. Homotetramer; dimer of dimers.

Its subcellular location is the cytoplasm. It catalyses the reaction L-aspartate 4-semialdehyde + pyruvate = (2S,4S)-4-hydroxy-2,3,4,5-tetrahydrodipicolinate + H2O + H(+). Its pathway is amino-acid biosynthesis; L-lysine biosynthesis via DAP pathway; (S)-tetrahydrodipicolinate from L-aspartate: step 3/4. Its function is as follows. Catalyzes the condensation of (S)-aspartate-beta-semialdehyde [(S)-ASA] and pyruvate to 4-hydroxy-tetrahydrodipicolinate (HTPA). This chain is 4-hydroxy-tetrahydrodipicolinate synthase, found in Campylobacter jejuni subsp. doylei (strain ATCC BAA-1458 / RM4099 / 269.97).